A 3394-amino-acid chain; its full sequence is Protein PFC0760c (3394 aa).

Low complexity-rich tracts occupy residues 471 to 508, 515 to 528, and 786 to 841; these read NNND…NYNN, NMNS…NNLH, and NNQN…NQNN. Disordered stretches follow at residues 471–539, 779–844, 1038–1099, 1892–1918, 2648–2693, 2835–2909, 3000–3057, and 3107–3394; these read NNND…DENN, MSSN…NAGI, NKKK…NNDD, TTTT…NNND, KMDL…DNHL, AKNE…NSNN, VSVG…DVNT, and DYVN…NSEE. A compositionally biased stretch (basic and acidic residues) spans 1038–1097; the sequence is NKKKNNDGDNKSQEDDDGNKKKNNDGDNKSQEDDDGNKKKNNDGDNKSQEDDYGNKKKNN. The segment covering 2657 to 2671 has biased composition (acidic residues); the sequence is GDDDDDDDDDDDDDN. Positions 2672–2686 are enriched in low complexity; it reads NNNNNNNNNNNNNNM. The segment covering 2836–2846 has biased composition (polar residues); sequence KNENYPVSTHY. Low complexity-rich tracts occupy residues 2855 to 2865 and 2872 to 2909; these read DNINNDNNNDN and NDNI…NSNN. 2 stretches are compositionally biased toward acidic residues: residues 3007-3047 and 3147-3257; these read DNND…EEKE and DDDE…DDND. Basic and acidic residues predominate over residues 3258 to 3292; sequence NDHNDDNNDEEKYSCHDDKNEHTNNDLLNIDHDNN. Positions 3300 to 3309 are enriched in polar residues; sequence LYSTYNVSVS. Residues 3310–3320 show a composition bias toward basic and acidic residues; that stretch reads HNKDPSNKENE. Positions 3321 to 3330 are enriched in polar residues; sequence IQNLISIDSS. Acidic residues predominate over residues 3331–3379; the sequence is NENDENDENDENDENDENDENDENDENDENDENDEKDENDENDENDENF. A compositionally biased stretch (polar residues) spans 3385–3394; the sequence is GTLNEMNSEE.

The polypeptide is Protein PFC0760c (Plasmodium falciparum (isolate 3D7)).